A 485-amino-acid chain; its full sequence is ATP synthase subunit beta 2 (485 aa).

Residues 1-10 (MSGMGEKSEQ) show a composition bias toward basic and acidic residues. Residues 1–27 (MSGMGEKSEQISKSARSTDPQEQESVA) are disordered. The span at 11–24 (ISKSARSTDPQEQE) shows a compositional bias: polar residues. 177 to 184 (GGAGVGKT) serves as a coordination point for ATP.

This sequence belongs to the ATPase alpha/beta chains family. As to quaternary structure, F-type ATPases have 2 components, CF(1) - the catalytic core - and CF(0) - the membrane proton channel. CF(1) has five subunits: alpha(3), beta(3), gamma(1), delta(1), epsilon(1). CF(0) has three main subunits: a(1), b(2) and c(9-12). The alpha and beta chains form an alternating ring which encloses part of the gamma chain. CF(1) is attached to CF(0) by a central stalk formed by the gamma and epsilon chains, while a peripheral stalk is formed by the delta and b chains.

Its subcellular location is the cell inner membrane. It catalyses the reaction ATP + H2O + 4 H(+)(in) = ADP + phosphate + 5 H(+)(out). In terms of biological role, produces ATP from ADP in the presence of a proton gradient across the membrane. The catalytic sites are hosted primarily by the beta subunits. This chain is ATP synthase subunit beta 2, found in Nitrosomonas eutropha (strain DSM 101675 / C91 / Nm57).